The chain runs to 321 residues: Methyltransferase cfoB (321 aa).

It belongs to the methyltransferase superfamily.

It participates in secondary metabolite biosynthesis; flavonoid biosynthesis. Methyltransferase; part of the gene cluster that mediates the biosynthesis of chlorflavonin, a fungal flavonoid with acetolactate synthase inhibitory activity. Within the pathway, cfoB is responsible for the methylation at position C7-OH of flavonoid. The pathway begins with the PKS-NRPS hybrid synthetase cfoA that uses benzoic acid or p-hydroxybenzoic acid as a starter unit with four rounds of chain elongation using malonyl-CoA to form the chalcone skeleton. Then, a new type of chalcone isomerase, cfoK, catalyzes the conversion of the chalcone into a flavanone by a histidine-mediated oxa-Michael addition mechanism. The desaturation of flavanone to flavone is catalyzed by a new type of flavone synthase, the flavin mononucleotide (FMN)-dependent oxidoreductase cfoJ. Monooxygenases cfoF, cfoG, and P450 cfoH are responsible for the hydroxylation of the flavonoid skeleton at sites C3, C8, and C2', respectively. Like cfoF, the dehydratase cfoI also plays a role in the hydroxylation of position C3. Methyltransferases cfoB, cfoC, and cfoD then catalyze the methylation of C7-OH, C8-OH, and C3-OH, respectively. Finally, the monooxygenase cfoE is responsible for the chlorination of flavonoid at position C3'. The protein is Methyltransferase cfoB of Aspergillus candidus.